The primary structure comprises 340 residues: Nucleoid-associated protein PSPA7_4451 (340 aa).

It belongs to the YejK family.

It is found in the cytoplasm. It localises to the nucleoid. In Pseudomonas paraeruginosa (strain DSM 24068 / PA7) (Pseudomonas aeruginosa (strain PA7)), this protein is Nucleoid-associated protein PSPA7_4451.